A 1270-amino-acid chain; its full sequence is DNA-directed RNA polymerase subunit beta (1270 aa).

Belongs to the RNA polymerase beta chain family. In terms of assembly, the RNAP catalytic core consists of 2 alpha, 1 beta, 1 beta' and 1 omega subunit. When a sigma factor is associated with the core the holoenzyme is formed, which can initiate transcription.

The enzyme catalyses RNA(n) + a ribonucleoside 5'-triphosphate = RNA(n+1) + diphosphate. In terms of biological role, DNA-dependent RNA polymerase catalyzes the transcription of DNA into RNA using the four ribonucleoside triphosphates as substrates. The polypeptide is DNA-directed RNA polymerase subunit beta (Porphyromonas cangingivalis).